Here is a 381-residue protein sequence, read N- to C-terminus: Trans-enoyl reductase iliB (381 aa).

50–53 is an NADP(+) binding site; sequence VDGK. 145–152 serves as a coordination point for substrate; it reads ATLATVGL. Residues 213–216, Tyr-231, and 278–279 contribute to the NADP(+) site; these read SPGS and LD. 298–302 is a binding site for substrate; sequence TYTQF. 367–368 contributes to the NADP(+) binding site; sequence IS.

This sequence belongs to the zinc-containing alcohol dehydrogenase family. Monomer.

The catalysed reaction is N-[(4E,6E,10S,12Z,14E)-6,10-dimethyl-3-oxohexadeca-4,6,12,14-tetraenoyl]-L-tyrosyl-[ACP] = (3E,5S)-3-[(2E,4E,8S,10E,12Z)-1-hydroxy-4,8-dimethyltetradeca-2,4,10,12-tetraen-1-ylidene]-5-[(4-hydroxyphenyl)methyl]pyrrolidine-2,4-dione + holo-[ACP] + H(+). Its pathway is mycotoxin biosynthesis. Functionally, trans-enoyl reductase; part of the gene cluster that mediates the biosynthesis of ilicicolin H, a 4-hydroxy-2-pyridonealkaloid that has potent and broad antifungal activities by inhibiting the mitochondrial respiration chain. IliB collaborates with the hybrid PKS-NRPS synthetase iliA to assemble the backbone of ilicicolin H. The PKS portion of iliA and trans-acting enoyl reductase iliB work together to construct an octaketide, and two methyl groups are introduced by the MT domain of iliA during the chain assembly. The nascent chain is then condensed with tyrosine, catalyzed by the iliA C domain, and the resulting PKS-NRPS hybrid is offloaded by the iliA RED domain to form an advanced tetramic acid intermediate. The biosynthesis of ilicicolin H starts with formation of the tetramic acid by the hybrid PKS-NRPS synthetase iliA with the partnering trans-enoyl reductase iliB since iliA lacks a designated enoylreductase (ER) domain. The cytochrome P450 monooxygenase iliC then catalyzes the ring expansion of the tetramate to the acyclic 2-pyridone. The pericyclase iliD further converts the acyclic 2-pyridone into 8-epi-ilicicolin H. 8-epi-ilicicolin H might then spontaneously convert to ilicicolin H since ilicicolin H is produced in the absence of the epimerase iliE, in contrast to what was observed for the Talaromyces variabilis ilicolin H biosynthetic pathway. The polypeptide is Trans-enoyl reductase iliB (Neonectria sp. (strain DH2)).